A 330-amino-acid chain; its full sequence is RNA polymerase sigma factor RpoS (330 aa).

Residues 56–89 (DATQLYLGEIGYSPLLTAEEEVYFARRALRGDVA) form a sigma-70 factor domain-1 region. The interval 94-164 (MIESNLRLVV…ERAIMNQTRT (71 aa)) is sigma-70 factor domain-2. The Interaction with polymerase core subunit RpoC signature appears at 118 to 121 (DLIE). The interval 174–249 (ELNVYLRTAR…DEKENGPEDT (76 aa)) is sigma-70 factor domain-3. Positions 262–315 (WLFELNAKQREVLARRFGLLGYEAATLEDVGREIGLTRERVRQIQVEGLRRLRE) are sigma-70 factor domain-4. A DNA-binding region (H-T-H motif) is located at residues 288 to 307 (LEDVGREIGLTRERVRQIQV).

Belongs to the sigma-70 factor family. RpoS subfamily. As to quaternary structure, interacts with the RNA polymerase core enzyme and RssB.

It localises to the cytoplasm. Sigma factors are initiation factors that promote the attachment of RNA polymerase to specific initiation sites and are then released. This sigma factor is the master transcriptional regulator of the stationary phase and the general stress response. Controls, positively or negatively, the expression of several hundred genes, which are mainly involved in metabolism, transport, regulation and stress management. Functionally, protects stationary phase cells from killing induced by endoribonuclease MazF. This is RNA polymerase sigma factor RpoS from Escherichia coli (strain K12).